Reading from the N-terminus, the 288-residue chain is 3-methyl-2-oxobutanoate hydroxymethyltransferase (288 aa).

Asp48 and Asp87 together coordinate Mg(2+). Residues 48-49, Asp87, and Lys116 each bind 3-methyl-2-oxobutanoate; that span reads DS. Glu118 contacts Mg(2+). Glu185 (proton acceptor) is an active-site residue.

The protein belongs to the PanB family. As to quaternary structure, homodecamer; pentamer of dimers. It depends on Mg(2+) as a cofactor.

The protein resides in the cytoplasm. It catalyses the reaction 3-methyl-2-oxobutanoate + (6R)-5,10-methylene-5,6,7,8-tetrahydrofolate + H2O = 2-dehydropantoate + (6S)-5,6,7,8-tetrahydrofolate. It functions in the pathway cofactor biosynthesis; coenzyme A biosynthesis. Functionally, catalyzes the reversible reaction in which hydroxymethyl group from 5,10-methylenetetrahydrofolate is transferred onto alpha-ketoisovalerate to form ketopantoate. The chain is 3-methyl-2-oxobutanoate hydroxymethyltransferase from Hyperthermus butylicus (strain DSM 5456 / JCM 9403 / PLM1-5).